The primary structure comprises 623 residues: Lamin-B2.L (623 aa).

A compositionally biased stretch (low complexity) spans 1–18 (MATTTPSRSTRSSMQSPA). Residues 1–30 (MATTTPSRSTRSSMQSPARGTSTPLSPTRI) form a disordered region. The segment at 2–27 (ATTTPSRSTRSSMQSPARGTSTPLSP) is head. Positions 19–30 (RGTSTPLSPTRI) are enriched in polar residues. Ser-26 is subject to Phosphoserine. Residues 28-64 (TRISRLQEKEELRHLNDRLAVYIDRVRALELENDRLM) are coil 1A. An IF rod domain is found at 35–391 (EKEELRHLND…KLLEGEEERL (357 aa)). The interval 64 to 74 (MVKISEKEEVT) is linker 1. Positions 75-211 (TREVSGIKNL…QSLQEEMDFR (137 aa)) are coil 1B. Residues 212-235 (KNIYEEESRETRKRHERRIVEVDR) form a linker 2 region. Positions 236–378 (GHHYDYESKL…VKLALDLEIN (143 aa)) are coil 2. The interval 380–592 (YRKLLEGEEE…VTKSVLRNVE (213 aa)) is tail. Disordered stretches follow at residues 388–473 (EERL…LSQQ) and 591–623 (VEEEEDEDADFGEEDLFHQQGDPRTTSRGCSVM). A Phosphoserine modification is found at Ser-396. Residues 398-416 (ESRVTVSRATSSSSSATRT) show a composition bias toward low complexity. Positions 420–425 (KRRRVE) match the Nuclear localization signal motif. The span at 443–473 (LGSSRITASEGSSRTITSGQSSTTRFHLSQQ) shows a compositional bias: polar residues. One can recognise an LTD domain in the interval 468–585 (FHLSQQASAT…EEVAVRTVTK (118 aa)). Positions 592 to 604 (EEEEDEDADFGEE) are enriched in acidic residues. Over residues 612–623 (DPRTTSRGCSVM) the composition is skewed to polar residues. Cys-620 bears the Cysteine methyl ester mark. Residue Cys-620 is the site of S-farnesyl cysteine attachment. Positions 621 to 623 (SVM) are cleaved as a propeptide — removed in mature form.

This sequence belongs to the intermediate filament family. In terms of processing, phosphorylation plays a key role in lamin organization, subcellular localization and nuclear envelope disintegration. Phosphorylation by CDK1 at Ser-26 at the onset of mitosis drives lamin disassembly and nuclear envelope breakdown.

It localises to the nucleus lamina. Its subcellular location is the nucleus envelope. It is found in the nucleus. The protein resides in the nucleoplasm. The protein localises to the nucleus matrix. Lamins are intermediate filament proteins that assemble into a filamentous meshwork, and which constitute the major components of the nuclear lamina, a fibrous layer on the nucleoplasmic side of the inner nuclear membrane. Lamins provide a framework for the nuclear envelope, bridging the nuclear envelope and chromatin, thereby playing an important role in nuclear assembly, chromatin organization, nuclear membrane and telomere dynamics. The structural integrity of the lamina is strictly controlled by the cell cycle, as seen by the disintegration and formation of the nuclear envelope in prophase and telophase, respectively. This Xenopus laevis (African clawed frog) protein is Lamin-B2.L (lmnb2.L).